Consider the following 221-residue polypeptide: Peroxiredoxin 2 (221 aa).

Positions 15-170 (PQIGAPAPDF…IIRIIDALQT (156 aa)) constitute a Thioredoxin domain. Cys-56 functions as the Cysteine sulfenic acid (-SOH) intermediate in the catalytic mechanism. Arg-133 provides a ligand contact to substrate. Cys-211 and Cys-217 are oxidised to a cystine.

Belongs to the peroxiredoxin family. Prx6 subfamily. Homodecamer. Pentamer of dimers that assemble into a ring structure.

It localises to the cytoplasm. It carries out the reaction a hydroperoxide + [thioredoxin]-dithiol = an alcohol + [thioredoxin]-disulfide + H2O. Thiol-specific peroxidase that catalyzes the reduction of hydrogen peroxide and organic hydroperoxides to water and alcohols, respectively. Plays a role in cell protection against oxidative stress by detoxifying peroxides. This is Peroxiredoxin 2 from Caldanaerobacter subterraneus subsp. tengcongensis (strain DSM 15242 / JCM 11007 / NBRC 100824 / MB4) (Thermoanaerobacter tengcongensis).